A 307-amino-acid polypeptide reads, in one-letter code: Cilia-and flagella-associated protein 96 (307 aa).

Disordered regions lie at residues 73–102 and 218–279; these read YSDPFKQRRQHRMQQSKKNLGKPFLPSSGE and HSQK…GPKT.

This sequence belongs to the CFAP96 family.

The protein localises to the cytoplasm. Its subcellular location is the cytoskeleton. It localises to the microtubule organizing center. The protein resides in the centrosome. The polypeptide is Cilia-and flagella-associated protein 96 (cfap96.L) (Xenopus laevis (African clawed frog)).